Here is a 314-residue protein sequence, read N- to C-terminus: MKKNPKISLIGSGNIGGTLAHLISIKELGDIVLFDVAEGVPQGKALDLMQAGTMLGSDIKIKGSNNYKDIEGSDAIIITAGLPRKPGMSRDDLISVNTKIMKDVAQNIKKYAPSAFVIVITNPLDVMVYVILKESGLPHNKVIGMAGVLDSSRFNLFLAEEFKVSVNSVNSIVLGGHGEAMVPLARYSTVSGIPIPDLIKMGLSSNENIEKIIDRTRNGGGEIVALLKTGSAYYAPATSAIEMLESYLKDKRQILTCAAYLQGEYGIHDLYVGVPIIIGTEGVLNVIELQLTKEEKALFDKSVEGVRKLIEMVK.

Residues 11-16 (GSGNIG) and Asp35 contribute to the NAD(+) site. Positions 84 and 90 each coordinate substrate. NAD(+) is bound by residues Asn97 and 120–122 (ITN). Residues Asn122 and Arg153 each coordinate substrate. The Proton acceptor role is filled by His177.

Belongs to the LDH/MDH superfamily. MDH type 3 family.

The enzyme catalyses (S)-malate + NAD(+) = oxaloacetate + NADH + H(+). Catalyzes the reversible oxidation of malate to oxaloacetate. This is Malate dehydrogenase from Rickettsia canadensis (strain McKiel).